Reading from the N-terminus, the 493-residue chain is High affinity nitrate transporter 2.7 (493 aa).

Residues 1 to 19 (MEPSQRNTKPPSFSDSTIP) are compositionally biased toward polar residues. The tract at residues 1 to 20 (MEPSQRNTKPPSFSDSTIPV) is disordered. Helical transmembrane passes span 46–66 (WLSLFSCFFSTFSIPPLVPVI), 70–90 (LNLSASTVSAAGIASFAGSIF), 113–133 (FLTAPVILSASLVSSPTSFIL), 136–156 (FFVGFSLANFVANQYWMSSMF), 174–194 (VGAGISQLLMPLIYSTIAEFL), 202–222 (VSFVFPAIFQVTTAVLVLLYG), 257–277 (FVEILIGGLGNYRAWILALLY), 299–319 (FGVNLEAAGTIAASFGISNIA), 341–361 (LWGLWIVQSVAGLLCVLLGRV), 368–388 (ILVMWVFSVFVQAASGLVFGV), 400–420 (VAGITGSGGTVGAVVTQFLLF), and 431–451 (ISLMGLMTFVFALSVTSIYFP).

The protein belongs to the major facilitator superfamily. Nitrate/nitrite porter (TC 2.A.1.8) family. Expressed in seeds, leaves and shoots. Lower expression in roots.

The protein resides in the vacuole membrane. In terms of biological role, involved in high-affinity nitrate transport. Controls nitrate content in seeds. The protein is High affinity nitrate transporter 2.7 (NRT2.7) of Arabidopsis thaliana (Mouse-ear cress).